The primary structure comprises 338 residues: Holliday junction branch migration complex subunit RuvB (338 aa).

The segment at 1 to 180 is large ATPase domain (RuvB-L); it reads MERLLDNKFS…FGIIERLDYY (180 aa). 9 residues coordinate ATP: L19, R20, G61, K64, T65, T66, R170, Y180, and R217. T65 lines the Mg(2+) pocket. The interval 181 to 251 is small ATPAse domain (RuvB-S); the sequence is TVEELSQIVM…VAKSGLEMFE (71 aa). A head domain (RuvB-H) region spans residues 254–338; sequence EYGLDLVDRN…FNVKESGDKR (85 aa). K309 and R314 together coordinate DNA.

The protein belongs to the RuvB family. As to quaternary structure, homohexamer. Forms an RuvA(8)-RuvB(12)-Holliday junction (HJ) complex. HJ DNA is sandwiched between 2 RuvA tetramers; dsDNA enters through RuvA and exits via RuvB. An RuvB hexamer assembles on each DNA strand where it exits the tetramer. Each RuvB hexamer is contacted by two RuvA subunits (via domain III) on 2 adjacent RuvB subunits; this complex drives branch migration. In the full resolvosome a probable DNA-RuvA(4)-RuvB(12)-RuvC(2) complex forms which resolves the HJ.

The protein localises to the cytoplasm. The catalysed reaction is ATP + H2O = ADP + phosphate + H(+). In terms of biological role, the RuvA-RuvB-RuvC complex processes Holliday junction (HJ) DNA during genetic recombination and DNA repair, while the RuvA-RuvB complex plays an important role in the rescue of blocked DNA replication forks via replication fork reversal (RFR). RuvA specifically binds to HJ cruciform DNA, conferring on it an open structure. The RuvB hexamer acts as an ATP-dependent pump, pulling dsDNA into and through the RuvAB complex. RuvB forms 2 homohexamers on either side of HJ DNA bound by 1 or 2 RuvA tetramers; 4 subunits per hexamer contact DNA at a time. Coordinated motions by a converter formed by DNA-disengaged RuvB subunits stimulates ATP hydrolysis and nucleotide exchange. Immobilization of the converter enables RuvB to convert the ATP-contained energy into a lever motion, pulling 2 nucleotides of DNA out of the RuvA tetramer per ATP hydrolyzed, thus driving DNA branch migration. The RuvB motors rotate together with the DNA substrate, which together with the progressing nucleotide cycle form the mechanistic basis for DNA recombination by continuous HJ branch migration. Branch migration allows RuvC to scan DNA until it finds its consensus sequence, where it cleaves and resolves cruciform DNA. This Caldicellulosiruptor saccharolyticus (strain ATCC 43494 / DSM 8903 / Tp8T 6331) protein is Holliday junction branch migration complex subunit RuvB.